The primary structure comprises 106 residues: UPF0145 protein BH0643 (106 aa).

The protein belongs to the UPF0145 family.

The chain is UPF0145 protein BH0643 from Halalkalibacterium halodurans (strain ATCC BAA-125 / DSM 18197 / FERM 7344 / JCM 9153 / C-125) (Bacillus halodurans).